We begin with the raw amino-acid sequence, 340 residues long: DnaJ homolog subfamily B member 1 (340 aa).

A J domain is found at 2-70 (GKDYYQTLGL…REIFDRYGEE (69 aa)). Thr307 bears the Phosphothreonine mark.

As to quaternary structure, interacts with DNAJC3. Interacts with HSF1 (via transactivation domain); this interaction results in the inhibition of heat shock- and HSF1-induced transcriptional activity during the attenuation and recovery phase period of the heat shock response. Interacts with BAG3.

It is found in the cytoplasm. The protein localises to the nucleus. It localises to the nucleolus. Its function is as follows. Interacts with HSP70 and can stimulate its ATPase activity. Stimulates the association between HSC70 and HIP. Negatively regulates heat shock-induced HSF1 transcriptional activity during the attenuation and recovery phase period of the heat shock response. Stimulates ATP hydrolysis and the folding of unfolded proteins mediated by HSPA1A/B (in vitro). This is DnaJ homolog subfamily B member 1 (DNAJB1) from Homo sapiens (Human).